Reading from the N-terminus, the 204-residue chain is Large ribosomal subunit protein bL25 (204 aa).

Residues 1-20 (MSETYELKAETRDRVGKGSS) form a disordered region.

It belongs to the bacterial ribosomal protein bL25 family. CTC subfamily. Part of the 50S ribosomal subunit; part of the 5S rRNA/L5/L18/L25 subcomplex. Contacts the 5S rRNA. Binds to the 5S rRNA independently of L5 and L18.

Its function is as follows. This is one of the proteins that binds to the 5S RNA in the ribosome where it forms part of the central protuberance. The sequence is that of Large ribosomal subunit protein bL25 from Rhizobium meliloti (strain 1021) (Ensifer meliloti).